A 422-amino-acid chain; its full sequence is MIDLKFLRDNPDVVRASQITRGEDPALVDELISADESRREAIKAADDLRAEQKAFGKKIGQASPEDRPALLEGSNELKAKVKDAEAAQEAAEAKVNELQMKLSNVVSGAPAGGEDDFVVLETIGEPRTFDFEPKDHLELGESLGLIDMKRGTKVSGARFYYLTGDGAMLQLGMLMLAAQKAREAGFSMMIPPVLVRPEIMAGTGFLGDHSEEIYYLERDDMYLVGTSEVALAGYHKDEIIDLNEGPVKYAGWSSCFRREAGSYGKDTRGILRVHQFDKVEMFVYCKPEDAEDVHQQLLGMEKEMLAAIEVPYRVIDVAGGDLGASAARKFDTEAWVPTQDTYRELTSTSNCTTFQARRLQTRYRDENGKPQIAATLNGTLATTRWLVAILENNQQADGSVVVPEALRPFVGKDVLKPVKQAG.

Threonine 226–glutamate 228 is an L-serine binding site. ATP contacts are provided by residues arginine 257 to glutamate 259 and valine 273. Glutamate 280 contributes to the L-serine binding site. Residue glutamate 344–serine 347 participates in ATP binding. L-serine is bound at residue threonine 379.

It belongs to the class-II aminoacyl-tRNA synthetase family. Type-1 seryl-tRNA synthetase subfamily. Homodimer. The tRNA molecule binds across the dimer.

The protein localises to the cytoplasm. The catalysed reaction is tRNA(Ser) + L-serine + ATP = L-seryl-tRNA(Ser) + AMP + diphosphate + H(+). It catalyses the reaction tRNA(Sec) + L-serine + ATP = L-seryl-tRNA(Sec) + AMP + diphosphate + H(+). It participates in aminoacyl-tRNA biosynthesis; selenocysteinyl-tRNA(Sec) biosynthesis; L-seryl-tRNA(Sec) from L-serine and tRNA(Sec): step 1/1. Its function is as follows. Catalyzes the attachment of serine to tRNA(Ser). Is also able to aminoacylate tRNA(Sec) with serine, to form the misacylated tRNA L-seryl-tRNA(Sec), which will be further converted into selenocysteinyl-tRNA(Sec). The chain is Serine--tRNA ligase from Corynebacterium glutamicum (strain ATCC 13032 / DSM 20300 / JCM 1318 / BCRC 11384 / CCUG 27702 / LMG 3730 / NBRC 12168 / NCIMB 10025 / NRRL B-2784 / 534).